Here is a 74-residue protein sequence, read N- to C-terminus: UPF0154 protein OB1676 (74 aa).

The helical transmembrane segment at 4–24 (IWVVLIAIAALVAGVALGFFI) threads the bilayer.

This sequence belongs to the UPF0154 family.

The protein localises to the membrane. The chain is UPF0154 protein OB1676 from Oceanobacillus iheyensis (strain DSM 14371 / CIP 107618 / JCM 11309 / KCTC 3954 / HTE831).